The primary structure comprises 660 residues: ATPase WRNIP1 (660 aa).

The segment at glutamine 17–proline 44 adopts a UBZ4-type zinc-finger fold. 5 residues coordinate Zn(2+): cysteine 20, cysteine 23, histidine 31, histidine 35, and cysteine 39. The tract at residues proline 50–alanine 191 is disordered. A phosphoserine mark is found at serine 65 and serine 75. The segment covering glutamate 76 to alanine 89 has biased composition (polar residues). Lysine 81 participates in a covalent cross-link: Glycyl lysine isopeptide (Lys-Gly) (interchain with G-Cter in ubiquitin). The residue at position 85 (threonine 85) is a Phosphothreonine. Phosphoserine occurs at positions 91 and 92. Positions serine 92 to glutamate 104 are enriched in acidic residues. Phosphothreonine is present on threonine 116. Over residues alanine 135–arginine 155 the composition is skewed to low complexity. Residue lysine 141 forms a Glycyl lysine isopeptide (Lys-Gly) (interchain with G-Cter in ubiquitin) linkage. Serine 153 carries the post-translational modification Phosphoserine. Residues glutamate 159–aspartate 182 are compositionally biased toward acidic residues. Lysine 220 is covalently cross-linked (Glycyl lysine isopeptide (Lys-Gly) (interchain with G-Cter in ubiquitin)). Proline 265–threonine 271 serves as a coordination point for ATP. Residues lysine 296, lysine 305, lysine 311, lysine 317, and lysine 330 each participate in a glycyl lysine isopeptide (Lys-Gly) (interchain with G-Cter in ubiquitin) cross-link. Residue lysine 477 forms a Glycyl lysine isopeptide (Lys-Gly) (interchain with G-Cter in SUMO2); alternate linkage. Lysine 477 participates in a covalent cross-link: Glycyl lysine isopeptide (Lys-Gly) (interchain with G-Cter in ubiquitin); alternate. Phosphotyrosine is present on residues tyrosine 529 and tyrosine 557. Residue lysine 622 forms a Glycyl lysine isopeptide (Lys-Gly) (interchain with G-Cter in ubiquitin) linkage. Residue lysine 628 forms a Glycyl lysine isopeptide (Lys-Gly) (interchain with G-Cter in ubiquitin); alternate linkage. At lysine 628 the chain carries N6-acetyllysine; alternate. A Glycyl lysine isopeptide (Lys-Gly) (interchain with G-Cter in ubiquitin) cross-link involves residue lysine 631.

Belongs to the AAA ATPase family. RarA/MGS1/WRNIP1 subfamily. As to quaternary structure, forms homooligomers, possibly octamers. Directly interacts with POLD1, POLD2 and POLD4. Interacts with the N-terminal domain of WRN. Interacts (via UBZ4-type zinc finger) with monoubiquitin and polyubiquitin. Interacts with TRIM14 and PPP6C; these interactions positively regulate the RIGI signaling pathway. In terms of processing, sumoylated with SUMO1 and SUMO2/3. As to expression, ubiquitously expressed.

It is found in the nucleus. The protein resides in the cytoplasm. The catalysed reaction is ATP + H2O = ADP + phosphate + H(+). Functions as a modulator of initiation or reinitiation events during DNA polymerase delta-mediated DNA synthesis. In the presence of ATP, stimulation of DNA polymerase delta-mediated DNA synthesis is decreased. Also plays a role in the innate immune defense against viruses. Stabilizes the RIGI dsRNA interaction and promotes RIGI 'Lys-63'-linked polyubiquitination. In turn, RIGI transmits the signal through mitochondrial MAVS. The protein is ATPase WRNIP1 of Rattus norvegicus (Rat).